A 191-amino-acid polypeptide reads, in one-letter code: Fe/S biogenesis protein NfuA (191 aa).

Cysteine 149 and cysteine 152 together coordinate [4Fe-4S] cluster.

Belongs to the NfuA family. In terms of assembly, homodimer. [4Fe-4S] cluster serves as cofactor.

Functionally, involved in iron-sulfur cluster biogenesis. Binds a 4Fe-4S cluster, can transfer this cluster to apoproteins, and thereby intervenes in the maturation of Fe/S proteins. Could also act as a scaffold/chaperone for damaged Fe/S proteins. The sequence is that of Fe/S biogenesis protein NfuA from Escherichia coli O7:K1 (strain IAI39 / ExPEC).